The sequence spans 214 residues: Insulin-like growth factor 2 (214 aa).

Residues 48–79 (EVASAETLCGGELVDALQFVCEDRGFYFSRPT) are b. Cystine bridges form between Cys-56–Cys-97, Cys-68–Cys-110, and Cys-96–Cys-101. The interval 80 to 90 (SRSNSRRSQNR) is c. Residues 91–111 (GIVEECCFRSCDLNLLEQYCA) form an a region. Residues 112-117 (KPAKSE) are d. Residues 118 to 214 (RDVSATSLQI…PPTDNYVSHN (97 aa)) constitute a propeptide, e peptide.

The protein belongs to the insulin family.

Its subcellular location is the secreted. Its function is as follows. The insulin-like growth factors, isolated from plasma, are structurally and functionally related to insulin but have a much higher growth-promoting activity. Acts as a ligand for integrin which is required for IGF2 signaling. This Oncorhynchus mykiss (Rainbow trout) protein is Insulin-like growth factor 2.